A 214-amino-acid polypeptide reads, in one-letter code: MSGLSQRQQRIYDYIKQFIRTNGYAPAIRDIQRELSISSTSVVAYNLRALESKGHIRREGNISRAIELINAEQPLPTVLGGQRVPVLGVIAAGQPIPVPNDSANSDDSVLVPEEIVGNDKLGDVYALRVKGYSMVDALIADGDIVLLRYQATAENGEMVAARIRDENEVTLKRIYWEGDRVRLQPANVTMEAMYYPSTNVEVQGRVVGVIRNLG.

A DNA-binding region (H-T-H motif) is located at residues 28–48; it reads IRDIQRELSISSTSVVAYNLR. Catalysis depends on for autocatalytic cleavage activity residues Ser-133 and Lys-172.

Belongs to the peptidase S24 family. Homodimer.

The enzyme catalyses Hydrolysis of Ala-|-Gly bond in repressor LexA.. Functionally, represses a number of genes involved in the response to DNA damage (SOS response), including recA and lexA. In the presence of single-stranded DNA, RecA interacts with LexA causing an autocatalytic cleavage which disrupts the DNA-binding part of LexA, leading to derepression of the SOS regulon and eventually DNA repair. This is LexA repressor from Herpetosiphon aurantiacus (strain ATCC 23779 / DSM 785 / 114-95).